The sequence spans 464 residues: Secretion-regulating guanine nucleotide exchange factor (464 aa).

RCC1 repeat units lie at residues 14-66 (AAAL…VVTD), 68-118 (GSLF…ILTE), 119-170 (NGQV…AATA), 172-229 (GTVF…SLTD), 230-282 (AGEL…AQTV), 283-349 (TGKV…LAVI), and 350-401 (GGVC…ALCQ). A compositionally biased stretch (basic and acidic residues) spans 301–313 (VETREGWESEKQD). The tract at residues 301–323 (VETREGWESEKQDPSLPGSGPQK) is disordered. The tract at residues 411 to 464 (HPSVTSPSPDATKEARSQEAMEQERNQKERHAETSPQAQSDRFRNGGLVAETLE) is disordered. A compositionally biased stretch (basic and acidic residues) spans 421 to 443 (ATKEARSQEAMEQERNQKERHAE). Ser427 carries the post-translational modification Phosphoserine.

As to quaternary structure, interacts with SEC5. The interaction occurs only in the presence of magnesium or manganese and is stimulated by dCTP or GTP.

It is found in the cytoplasm. It localises to the nucleus. Functionally, probable guanine nucleotide exchange factor (GEF), which may be involved in the secretion process. The protein is Secretion-regulating guanine nucleotide exchange factor (SERGEF) of Bos taurus (Bovine).